A 107-amino-acid chain; its full sequence is Ig kappa chain V-VI region NQ2-48.2.2 (107 aa).

Positions 1-23 (QILLTQSPAIMSASPGQKVTMTC) are framework-1. An intrachain disulfide couples C23 to C87. The complementarity-determining-1 stretch occupies residues 24–33 (SASSSVSYMH). Residues 34-48 (WYQQKSGTSPKRWIY) are framework-2. Residues 49–55 (DTSKLAS) are complementarity-determining-2. The segment at 56 to 87 (GVPARFSGSGSATSYSLTITSMQAEDAATYYC) is framework-3. The segment at 88-96 (QQWSSNPLT) is complementarity-determining-3. Residues 97–106 (FGAGTKLXLK) form a framework-4 region.

In terms of biological role, anti-2-phenyl oxazolone (PHOX) Antibody. The chain is Ig kappa chain V-VI region NQ2-48.2.2 from Mus musculus (Mouse).